The chain runs to 331 residues: tRNA N6-adenosine threonylcarbamoyltransferase (331 aa).

Fe cation is bound by residues H109, H113, and Y130. Substrate is bound by residues 130–134 (YLSGG), D162, D183, and S262. D290 lines the Fe cation pocket.

Belongs to the KAE1 / TsaD family. Requires Fe(2+) as cofactor.

It localises to the cytoplasm. It catalyses the reaction L-threonylcarbamoyladenylate + adenosine(37) in tRNA = N(6)-L-threonylcarbamoyladenosine(37) in tRNA + AMP + H(+). Required for the formation of a threonylcarbamoyl group on adenosine at position 37 (t(6)A37) in tRNAs that read codons beginning with adenine. Is probably involved in the transfer of the threonylcarbamoyl moiety of threonylcarbamoyl-AMP (TC-AMP) to the N6 group of A37. The polypeptide is tRNA N6-adenosine threonylcarbamoyltransferase (Saccharolobus islandicus (strain M.16.27) (Sulfolobus islandicus)).